A 139-amino-acid chain; its full sequence is Sec-independent protein translocase protein TatB (139 aa).

Residues 1 to 21 (MFDIGFTELLLVGLVALMVLG) traverse the membrane as a helical segment. The tract at residues 69 to 139 (LDLEREMKQS…PLRSDRPSEP (71 aa)) is disordered. The span at 80–95 (MPPPASNPAATPPSPP) shows a compositional bias: pro residues.

Belongs to the TatB family. The Tat system comprises two distinct complexes: a TatABC complex, containing multiple copies of TatA, TatB and TatC subunits, and a separate TatA complex, containing only TatA subunits. Substrates initially bind to the TatABC complex, which probably triggers association of the separate TatA complex to form the active translocon.

It is found in the cell inner membrane. Its function is as follows. Part of the twin-arginine translocation (Tat) system that transports large folded proteins containing a characteristic twin-arginine motif in their signal peptide across membranes. Together with TatC, TatB is part of a receptor directly interacting with Tat signal peptides. TatB may form an oligomeric binding site that transiently accommodates folded Tat precursor proteins before their translocation. The sequence is that of Sec-independent protein translocase protein TatB from Stutzerimonas stutzeri (strain A1501) (Pseudomonas stutzeri).